Consider the following 569-residue polypeptide: Sulfite reductase [NADPH] hemoprotein beta-component (569 aa).

Positions 434, 440, 479, and 483 each coordinate [4Fe-4S] cluster. Position 483 (cysteine 483) interacts with siroheme.

Belongs to the nitrite and sulfite reductase 4Fe-4S domain family. Alpha(8)-beta(8). The alpha component is a flavoprotein, the beta component is a hemoprotein. The cofactor is siroheme. [4Fe-4S] cluster is required as a cofactor.

It catalyses the reaction hydrogen sulfide + 3 NADP(+) + 3 H2O = sulfite + 3 NADPH + 4 H(+). The protein operates within sulfur metabolism; hydrogen sulfide biosynthesis; hydrogen sulfide from sulfite (NADPH route): step 1/1. Component of the sulfite reductase complex that catalyzes the 6-electron reduction of sulfite to sulfide. This is one of several activities required for the biosynthesis of L-cysteine from sulfate. The polypeptide is Sulfite reductase [NADPH] hemoprotein beta-component (Staphylococcus carnosus (strain TM300)).